A 312-amino-acid chain; its full sequence is Glycine--tRNA ligase alpha subunit (312 aa).

It belongs to the class-II aminoacyl-tRNA synthetase family. Tetramer of two alpha and two beta subunits.

The protein localises to the cytoplasm. The enzyme catalyses tRNA(Gly) + glycine + ATP = glycyl-tRNA(Gly) + AMP + diphosphate. This chain is Glycine--tRNA ligase alpha subunit (glyQ), found in Buchnera aphidicola subsp. Acyrthosiphon pisum (strain APS) (Acyrthosiphon pisum symbiotic bacterium).